The chain runs to 283 residues: Pantothenate synthetase (283 aa).

Residue 30–37 (MGNLHDGH) participates in ATP binding. The Proton donor role is filled by histidine 37. Glutamine 61 is a (R)-pantoate binding site. Glutamine 61 lines the beta-alanine pocket. 149-152 (GEKD) provides a ligand contact to ATP. Glutamine 155 contributes to the (R)-pantoate binding site. Residues valine 178 and 186–189 (LSSR) each bind ATP.

It belongs to the pantothenate synthetase family. As to quaternary structure, homodimer.

Its subcellular location is the cytoplasm. It catalyses the reaction (R)-pantoate + beta-alanine + ATP = (R)-pantothenate + AMP + diphosphate + H(+). Its pathway is cofactor biosynthesis; (R)-pantothenate biosynthesis; (R)-pantothenate from (R)-pantoate and beta-alanine: step 1/1. Its function is as follows. Catalyzes the condensation of pantoate with beta-alanine in an ATP-dependent reaction via a pantoyl-adenylate intermediate. The protein is Pantothenate synthetase of Salmonella arizonae (strain ATCC BAA-731 / CDC346-86 / RSK2980).